A 180-amino-acid chain; its full sequence is Acireductone dioxygenase (180 aa).

His99, His101, Glu105, and His145 together coordinate Fe(2+). Ni(2+) contacts are provided by His99, His101, Glu105, and His145.

Belongs to the acireductone dioxygenase (ARD) family. Monomer. Fe(2+) is required as a cofactor. It depends on Ni(2+) as a cofactor.

It catalyses the reaction 1,2-dihydroxy-5-(methylsulfanyl)pent-1-en-3-one + O2 = 3-(methylsulfanyl)propanoate + CO + formate + 2 H(+). The catalysed reaction is 1,2-dihydroxy-5-(methylsulfanyl)pent-1-en-3-one + O2 = 4-methylsulfanyl-2-oxobutanoate + formate + 2 H(+). It participates in amino-acid biosynthesis; L-methionine biosynthesis via salvage pathway; L-methionine from S-methyl-5-thio-alpha-D-ribose 1-phosphate: step 5/6. Its function is as follows. Catalyzes 2 different reactions between oxygen and the acireductone 1,2-dihydroxy-3-keto-5-methylthiopentene (DHK-MTPene) depending upon the metal bound in the active site. Fe-containing acireductone dioxygenase (Fe-ARD) produces formate and 2-keto-4-methylthiobutyrate (KMTB), the alpha-ketoacid precursor of methionine in the methionine recycle pathway. Ni-containing acireductone dioxygenase (Ni-ARD) produces methylthiopropionate, carbon monoxide and formate, and does not lie on the methionine recycle pathway. The chain is Acireductone dioxygenase from Geobacillus thermodenitrificans (strain NG80-2).